The following is a 179-amino-acid chain: tRNA-splicing endonuclease (179 aa).

Catalysis depends on residues tyrosine 115, histidine 125, and lysine 156.

This sequence belongs to the tRNA-intron endonuclease family. Archaeal short subfamily. Homotetramer; although the tetramer contains four active sites, only two participate in the cleavage. Therefore, it should be considered as a dimer of dimers.

The enzyme catalyses pretRNA = a 3'-half-tRNA molecule with a 5'-OH end + a 5'-half-tRNA molecule with a 2',3'-cyclic phosphate end + an intron with a 2',3'-cyclic phosphate and a 5'-hydroxyl terminus.. In terms of biological role, endonuclease that removes tRNA introns. Cleaves pre-tRNA at the 5'- and 3'-splice sites to release the intron. The products are an intron and two tRNA half-molecules bearing 2',3' cyclic phosphate and 5'-OH termini. Recognizes a pseudosymmetric substrate in which 2 bulged loops of 3 bases are separated by a stem of 4 bp. The protein is tRNA-splicing endonuclease (endA) of Methanocaldococcus jannaschii (strain ATCC 43067 / DSM 2661 / JAL-1 / JCM 10045 / NBRC 100440) (Methanococcus jannaschii).